The primary structure comprises 203 residues: Undecaprenyl phosphate transporter A (203 aa).

A run of 5 helical transmembrane segments spans residues 16–36 (AIFI…EIIL), 48–68 (LSIL…LLIL), 108–128 (YGVW…LITI), 137–157 (VVTF…GLIL), and 173–193 (LHTY…YFAI).

The protein belongs to the DedA family.

Its subcellular location is the cell membrane. Functionally, flippase that catalyzes the transport of undecaprenyl phosphate (UndP) across the cytoplasmic membrane, from the external side to the cytoplasmic side. Is involved in UndP recycling during peptidoglycan synthesis. In Staphylococcus aureus (strain NCTC 8325 / PS 47), this protein is Undecaprenyl phosphate transporter A.